Here is an 839-residue protein sequence, read N- to C-terminus: LPS-assembly protein LptD (839 aa).

Positions 1–21 (MAIGITACVLSLINYQGLAYS) are cleaved as a signal peptide.

It belongs to the LptD family. Component of the lipopolysaccharide transport and assembly complex. Interacts with LptE and LptA.

The protein localises to the cell outer membrane. Functionally, together with LptE, is involved in the assembly of lipopolysaccharide (LPS) at the surface of the outer membrane. The chain is LPS-assembly protein LptD from Legionella pneumophila (strain Lens).